A 426-amino-acid chain; its full sequence is Glutamate-1-semialdehyde 2,1-aminomutase (426 aa).

K265 carries the N6-(pyridoxal phosphate)lysine modification.

This sequence belongs to the class-III pyridoxal-phosphate-dependent aminotransferase family. HemL subfamily. As to quaternary structure, homodimer. The cofactor is pyridoxal 5'-phosphate.

It localises to the cytoplasm. The enzyme catalyses (S)-4-amino-5-oxopentanoate = 5-aminolevulinate. Its pathway is porphyrin-containing compound metabolism; protoporphyrin-IX biosynthesis; 5-aminolevulinate from L-glutamyl-tRNA(Glu): step 2/2. This chain is Glutamate-1-semialdehyde 2,1-aminomutase, found in Salmonella arizonae (strain ATCC BAA-731 / CDC346-86 / RSK2980).